Here is a 700-residue protein sequence, read N- to C-terminus: Pyrroloquinoline quinone transporter (700 aa).

Positions 1-23 (MKIFSVRQTVLPALLVLSPVVFA) are cleaved as a signal peptide. One can recognise a TBDR plug domain in the interval 39 to 157 (SELDTPAAVS…SGGVMNVTTQ (119 aa)). A run of 24 beta stranded transmembrane segments spans residues 132–136 (NVEVL), 150–160 (GVMNVTTQTGQ), 162–171 (PPTIEASSYY), 177–186 (WRYGLKATGA), 195–204 (DVDYTVSTTR), 220–227 (LANAKLGV), 233–241 (SKLSLIFNS), 280–288 (QAGLRYERS), 295–301 (MSVMMYA), 335–344 (GIDSRWTHRG), 350–358 (VTFTTGLNY), 398–405 (DPYLQTQW), 411–419 (LSLDAGVRY), 447–456 (WLPAGSLKYA), 464–468 (YLAAG), 500–509 (TIEIGSKTRI), 511–520 (DGLLSLALFQ), 549–556 (GAELAWDQ), 563–570 (RVNASWTW), 597–604 (MGFASIGY), 611–617 (YAGTEAR), 637–647 (LVGLFTGYKYN), 651–659 (LTVDLFGRV), and 689–697 (YGVGMNIAW). The TBDR beta-barrel domain maps to 162–697 (PPTIEASSYY…NYGVGMNIAW (536 aa)). The short motif at 680-700 (YYEPSPGRNYGVGMNIAWRFE) is the TonB C-terminal box element.

This sequence belongs to the TonB-dependent receptor family.

It is found in the cell outer membrane. Its function is as follows. Mediates the TonB-dependent high affinity transport across the outer membrane of pyrroloquinoline quinone (PQQ), a redox cofactor required for the activity of Gcd and Asd dehydrogenases. The uptake process is energised via the TonB-ExbBD complex. Not involved in the transport of an iron-containing substrate under laboratory conditions. In Escherichia coli (strain K12), this protein is Pyrroloquinoline quinone transporter.